The primary structure comprises 1077 residues: Eukaryotic translation initiation factor 2-alpha kinase pek-1 (1077 aa).

An N-terminal signal peptide occupies residues 1-23 (MSVYYIVLAGFLLFMALVPFNAG). Over 24–453 (QQYIDDDIEV…ITLMQTIFSY (430 aa)) the chain is Lumenal. N-linked (GlcNAc...) asparagine glycosylation is present at Asn206. The helical transmembrane segment at 454-474 (IFNPTAVVSFLAGLIGVTVAV) threads the bilayer. At 475–1077 (VYNKIAKSSP…HEVATHKFLQ (603 aa)) the chain is on the cytoplasmic side. Positions 604 to 1076 (FEVKKVIGHG…AHEVATHKFL (473 aa)) constitute a Protein kinase domain. ATP is bound by residues 610–618 (IGHGGFGVV) and Lys633. The tract at residues 727–834 (MPPVVGNTTD…FVDGSDDVDN (108 aa)) is disordered. Polar residues predominate over residues 732–746 (GNTTDAENSWSTSAK). A compositionally biased stretch (basic and acidic residues) spans 766–778 (GSDRTTAELKEES). Residues 783 to 796 (ESDEESDTTEDSSS) show a composition bias toward acidic residues. Residues 797–808 (SDESPSSSSGSS) show a composition bias toward low complexity. The active-site Proton acceptor is the Asp933.

Belongs to the protein kinase superfamily. Ser/Thr protein kinase family. GCN2 subfamily. Forms dimers with HSPA5/BIP in resting cells. Oligomerizes in ER-stressed cells. Post-translationally, autophosphorylated. N-glycosylated. Expressed in intestinal cells.

Its subcellular location is the endoplasmic reticulum membrane. It carries out the reaction L-seryl-[protein] + ATP = O-phospho-L-seryl-[protein] + ADP + H(+). The enzyme catalyses L-threonyl-[protein] + ATP = O-phospho-L-threonyl-[protein] + ADP + H(+). Perturbation in protein folding in the endoplasmic reticulum (ER) promotes reversible dissociation from HSPA5/BIP and oligomerization, resulting in transautophosphorylation and kinase activity induction. Functionally, phosphorylates the alpha subunit of eukaryotic translation-initiation factor 2 (eIF2alpha), leading to its inactivation and thus to a rapid reduction of translational initiation and repression of global protein synthesis. May phosphorylate eIF2alpha during hypoxia. Proposed to have a role in alleviating endoplasmic reticulum stress. This is Eukaryotic translation initiation factor 2-alpha kinase pek-1 (pek-1) from Caenorhabditis elegans.